Consider the following 728-residue polypeptide: Catalase-peroxidase (728 aa).

Residues 1 to 26 (MDNPTDTAGKCPVAHGNKPRGPSNRD) form a disordered region. The tryptophyl-tyrosyl-methioninium (Trp-Tyr) (with M-244) cross-link spans 96–218 (WHSAGTYRIT…LGAVQMGLIY (123 aa)). His-97 acts as the Proton acceptor in catalysis. Residues 218-244 (YVNPEGPNGNPDPVAAARDIRETFARM) constitute a cross-link (tryptophyl-tyrosyl-methioninium (Tyr-Met) (with W-96)). Position 259 (His-259) interacts with heme b.

It belongs to the peroxidase family. Peroxidase/catalase subfamily. As to quaternary structure, homodimer or homotetramer. Heme b serves as cofactor. In terms of processing, formation of the three residue Trp-Tyr-Met cross-link is important for the catalase, but not the peroxidase activity of the enzyme.

The enzyme catalyses H2O2 + AH2 = A + 2 H2O. It catalyses the reaction 2 H2O2 = O2 + 2 H2O. Functionally, bifunctional enzyme with both catalase and broad-spectrum peroxidase activity. Important for stationary phase survival. The protein is Catalase-peroxidase of Rhizobium etli (strain ATCC 51251 / DSM 11541 / JCM 21823 / NBRC 15573 / CFN 42).